Here is a 213-residue protein sequence, read N- to C-terminus: Protein-L-isoaspartate O-methyltransferase (213 aa).

Ser-62 is an active-site residue.

Belongs to the methyltransferase superfamily. L-isoaspartyl/D-aspartyl protein methyltransferase family.

The protein resides in the cytoplasm. It catalyses the reaction [protein]-L-isoaspartate + S-adenosyl-L-methionine = [protein]-L-isoaspartate alpha-methyl ester + S-adenosyl-L-homocysteine. In terms of biological role, catalyzes the methyl esterification of L-isoaspartyl residues in peptides and proteins that result from spontaneous decomposition of normal L-aspartyl and L-asparaginyl residues. It plays a role in the repair and/or degradation of damaged proteins. In Idiomarina loihiensis (strain ATCC BAA-735 / DSM 15497 / L2-TR), this protein is Protein-L-isoaspartate O-methyltransferase.